The sequence spans 349 residues: ATP synthase subunit a-2 (349 aa).

A propeptide spanning residues 1–97 (MERLTRLNHF…SNYMKLMEIP (97 aa)) is cleaved from the precursor. Helical transmembrane passes span 118-138 (FSFT…LLLI), 184-204 (FFPC…QGMI), 213-233 (HFLI…IVGF), 240-260 (FFSF…LVLL), 280-300 (MMAG…MLCM), 303-323 (IFYF…TGLE), and 326-346 (VAIL…NDAI).

It belongs to the ATPase A chain family. As to quaternary structure, F-type ATPases have 2 components, CF(1) - the catalytic core - and CF(0) - the membrane proton channel. CF(1) has five subunits: alpha(3), beta(3), gamma(1), delta(1), epsilon(1). CF(0) has three main subunits: a, b and c.

It localises to the mitochondrion inner membrane. In terms of biological role, mitochondrial membrane ATP synthase (F(1)F(0) ATP synthase or Complex V) produces ATP from ADP in the presence of a proton gradient across the membrane which is generated by electron transport complexes of the respiratory chain. F-type ATPases consist of two structural domains, F(1) - containing the extramembraneous catalytic core and F(0) - containing the membrane proton channel, linked together by a central stalk and a peripheral stalk. During catalysis, ATP synthesis in the catalytic domain of F(1) is coupled via a rotary mechanism of the central stalk subunits to proton translocation. Key component of the proton channel; it may play a direct role in the translocation of protons across the membrane. The protein is ATP synthase subunit a-2 (ATP6-2) of Arabidopsis thaliana (Mouse-ear cress).